The following is an 88-amino-acid chain: Large ribosomal subunit protein bL31B (88 aa).

This sequence belongs to the bacterial ribosomal protein bL31 family. Type B subfamily. As to quaternary structure, part of the 50S ribosomal subunit.

The polypeptide is Large ribosomal subunit protein bL31B (Corynebacterium efficiens (strain DSM 44549 / YS-314 / AJ 12310 / JCM 11189 / NBRC 100395)).